The primary structure comprises 122 residues: Urease subunit beta (122 aa).

The protein belongs to the urease beta subunit family. Heterotrimer of UreA (gamma), UreB (beta) and UreC (alpha) subunits. Three heterotrimers associate to form the active enzyme.

Its subcellular location is the cytoplasm. The enzyme catalyses urea + 2 H2O + H(+) = hydrogencarbonate + 2 NH4(+). Its pathway is nitrogen metabolism; urea degradation; CO(2) and NH(3) from urea (urease route): step 1/1. The polypeptide is Urease subunit beta (Acetivibrio thermocellus (strain ATCC 27405 / DSM 1237 / JCM 9322 / NBRC 103400 / NCIMB 10682 / NRRL B-4536 / VPI 7372) (Clostridium thermocellum)).